Here is a 455-residue protein sequence, read N- to C-terminus: Phosphoglucosamine mutase (455 aa).

Catalysis depends on serine 108, which acts as the Phosphoserine intermediate. Mg(2+) is bound by residues serine 108, aspartate 248, aspartate 250, and aspartate 252. The residue at position 108 (serine 108) is a Phosphoserine.

The protein belongs to the phosphohexose mutase family. Mg(2+) serves as cofactor. Post-translationally, activated by phosphorylation.

The catalysed reaction is alpha-D-glucosamine 1-phosphate = D-glucosamine 6-phosphate. Functionally, catalyzes the conversion of glucosamine-6-phosphate to glucosamine-1-phosphate. This Leuconostoc mesenteroides subsp. mesenteroides (strain ATCC 8293 / DSM 20343 / BCRC 11652 / CCM 1803 / JCM 6124 / NCDO 523 / NBRC 100496 / NCIMB 8023 / NCTC 12954 / NRRL B-1118 / 37Y) protein is Phosphoglucosamine mutase.